Reading from the N-terminus, the 108-residue chain is Replication restart protein PriB (108 aa).

In terms of domain architecture, SSB spans 11 to 108 (INRNQVIISG…VLHVRDTRII (98 aa)).

The protein belongs to the PriB family. As to quaternary structure, homodimer. Interacts with PriA and DnaT. Component of the replication restart primosome. Primosome assembly occurs via a 'hand-off' mechanism. PriA binds to replication forks, subsequently PriB then DnaT bind; DnaT then displaces ssDNA to generate the helicase loading substrate.

Involved in the restart of stalled replication forks, which reloads the replicative helicase on sites other than the origin of replication; the PriA-PriB pathway is the major replication restart pathway. During primosome assembly it facilitates complex formation between PriA and DnaT on DNA; stabilizes PriA on DNA. Stimulates the DNA unwinding activity of PriA helicase. In Nitrosomonas europaea (strain ATCC 19718 / CIP 103999 / KCTC 2705 / NBRC 14298), this protein is Replication restart protein PriB.